The chain runs to 544 residues: Carboxypeptidase Y homolog A (544 aa).

Residues 1–17 form the signal peptide; sequence MKSLALALLVGGAIASG. Residues 18–124 constitute a propeptide that is removed on maturation; sequence PQQQVLREPV…RLDTYDLRVK (107 aa). Cystine bridges form between C178-C417, C312-C326, C336-C359, C343-C352, and C381-C387. N-linked (GlcNAc...) asparagine glycosylation occurs at N209. The active site involves S265. D456 is an active-site residue. An N-linked (GlcNAc...) asparagine glycan is attached at N506. Residue H517 is part of the active site.

Belongs to the peptidase S10 family.

The protein resides in the vacuole. It carries out the reaction Release of a C-terminal amino acid with broad specificity.. In terms of biological role, vacuolar carboxypeptidase involved in degradation of small peptides. Digests preferentially peptides containing an aliphatic or hydrophobic residue in P1' position, as well as methionine, leucine or phenylalanine in P1 position of ester substrate. The sequence is that of Carboxypeptidase Y homolog A (CPYA) from Ajellomyces capsulatus (strain G186AR / H82 / ATCC MYA-2454 / RMSCC 2432) (Darling's disease fungus).